The primary structure comprises 352 residues: MAIDENKQKALAAALGQIEKQFGKGSIMRLGEDRSMDVETISTGSLSLDIALGAGGLPMGRIVEIYGPESSGKTTLTLQVIAAAQREGKTCAFIDAEHALDPVYARKLGVDIDNLLCSQPDTGEQALEICDALARSGAVDVIVVDSVAALTPKAEIEGEIGDSHMGLAARMMSQAMRKLAGNLKQSNTLLIFINQIRMKIGVMFGNPETTTGGNALKFYASVRLDIRRIGAVKEGDNVVGSETRVKVVKNKIAAPFKQAEFQILYGEGINFFGELVDLGVKEKLIEKAGAWYSYNGDKIGQGKANAITWLKENPAAAKEIEKKVRELLLNNQDSTPDFAVDGNDAEETEQDF.

Residue G67–T74 coordinates ATP. Residues D333 to F352 are disordered. The segment covering N343 to F352 has biased composition (acidic residues).

Belongs to the RecA family.

It is found in the cytoplasm. Can catalyze the hydrolysis of ATP in the presence of single-stranded DNA, the ATP-dependent uptake of single-stranded DNA by duplex DNA, and the ATP-dependent hybridization of homologous single-stranded DNAs. It interacts with LexA causing its activation and leading to its autocatalytic cleavage. The polypeptide is Protein RecA (Klebsiella pneumoniae (strain 342)).